A 148-amino-acid polypeptide reads, in one-letter code: uncharacterized protein (148 aa).

Residues 1-17 (MCPPVRQRPAQAPPAKR) show a composition bias toward low complexity. 2 disordered regions span residues 1-86 (MCPP…VQSP) and 122-148 (RAHRLPQPKPPCLSRQRPSPDSQTSPC). Residues 38-57 (RPPKMQRRPRPPVAKRRRFP) show a composition bias toward basic residues. Positions 137 to 148 (QRPSPDSQTSPC) are enriched in polar residues.

The protein belongs to the Epstein-Barr virus BLLF2 family.

This is an uncharacterized protein from Epstein-Barr virus (strain AG876) (HHV-4).